The sequence spans 540 residues: MAVSAFRGTRLPLFHHSQFPVARTVSGTSKKMIGARNFKGFVLTAQYSQTQDLFTSRLQSQIEKLPKLVEDIVQTSINTGPRGVTRLVQGVQAFVGVGGEWLNDLSKSTSASGGLPSELQLGLLSPLYLRKLFERMGATYIKLGQFIASAPTLFPPEYVKEFQNCFDKAPPVPFEEIRKILQEELGRPIESVYEYVDPTPIASASIAQVHGARLRGSQEDVVIKVLKPGIEDFLVADLNFIYVVSRIFEFLSPEFSRTSLVGIVKDIRESMLEEVDFNKEAQNIESFKRYLETMGLTGQATAPRVYKYCSSRRVLTMERLYGVPLTDLDSIRSLVSSPENSLITALNVWFGSLLACESFHADVHAGNLWLLRDGRIGFLDFGIVGRISPKTWAAMEVFLASIATEEYESMASALIQMGATNRDVDGKAFAKDLEKMFSSIQELDTEIVVATARGTNSDTTAVAANVVMDERQMNALFLDLVRVSESYGLKFPREFALLLKQLLYFDRYTRLLAPNLNMLQDQRISIASNKRTNGYKDSFN.

The N-terminal 58 residues, 1–58 (MAVSAFRGTRLPLFHHSQFPVARTVSGTSKKMIGARNFKGFVLTAQYSQTQDLFTSRL), are a transit peptide targeting the chloroplast. The Protein kinase domain occupies 195–533 (YVDPTPIASA…ISIASNKRTN (339 aa)). ATP is bound by residues 201 to 209 (IASASIAQV) and Lys224. The active-site Proton acceptor is the Asp362.

This sequence belongs to the protein kinase superfamily. ADCK protein kinase family.

The protein localises to the plastid. It localises to the chloroplast. It is found in the plastoglobule. This is an uncharacterized protein from Arabidopsis thaliana (Mouse-ear cress).